Reading from the N-terminus, the 331-residue chain is T-cell acute lymphocytic leukemia protein 1 (331 aa).

The segment covering 1-22 has biased composition (basic and acidic residues); sequence MTERPPSEAARSDPQLEGRDAA. 2 disordered regions span residues 1–27 and 40–86; these read MTERPPSEAARSDPQLEGRDAAEASMA and ETSR…EARH. The residue at position 12 (Ser12) is a Phosphoserine. The span at 56–70 shows a compositional bias: gly residues; it reads ARGGPGGGPAGGGGA. Over residues 72 to 86 the composition is skewed to basic and acidic residues; the sequence is RDLKGRDAATAEARH. Phosphoserine is present on residues Ser122 and Ser172. The bHLH domain maps to 187 to 239; it reads VRRIFTNSRERWRQQNVNGAFAELRKLIPTHPPDKKLSKNEILRLAMKYINFL. The interval 249–331 is disordered; it reads EGTQRAKTGK…LPAADGAGPR (83 aa). The segment covering 263 to 275 has biased composition (gly residues); sequence GAGGGGGGGGGGA.

In terms of assembly, efficient DNA binding requires dimerization with another bHLH protein. Forms heterodimers with TCF3. Binds to the LIM domain containing protein LMO2 and to DRG1. Can assemble in a complex with LDB1 and LMO2. Component of a TAL-1 complex composed at least of CBFA2T3, LDB1, TAL1 and TCF3. Interacts with SBNO2; this interaction inhibits TAL1 occupancy of the DCSTAMP promoter, leading to the activation of the DCSTAMP promoter by the transcription factor MITF. In terms of processing, phosphorylated on serine residues. Phosphorylation of Ser-122 is strongly stimulated by hypoxia. Ubiquitinated; subsequent to hypoxia-dependent phosphorylation of Ser-122, ubiquitination targets the protein for rapid degradation via the ubiquitin system. This process may be characteristic for microvascular endothelial cells, since it could not be observed in large vessel endothelial cells. Leukemic stem cell.

The protein resides in the nucleus. Functionally, implicated in the genesis of hemopoietic malignancies. It may play an important role in hemopoietic differentiation. Serves as a positive regulator of erythroid differentiation. The protein is T-cell acute lymphocytic leukemia protein 1 (TAL1) of Homo sapiens (Human).